We begin with the raw amino-acid sequence, 275 residues long: Pantothenate synthetase (275 aa).

Residue 26–33 (MGNLHDGH) coordinates ATP. Residue H33 is the Proton donor of the active site. Q57 contributes to the (R)-pantoate binding site. Q57 serves as a coordination point for beta-alanine. 144-147 (GKKD) is a binding site for ATP. Residue Q150 participates in (R)-pantoate binding. ATP is bound by residues V173 and 181–184 (LSSR).

Belongs to the pantothenate synthetase family. Homodimer.

It localises to the cytoplasm. The catalysed reaction is (R)-pantoate + beta-alanine + ATP = (R)-pantothenate + AMP + diphosphate + H(+). It participates in cofactor biosynthesis; (R)-pantothenate biosynthesis; (R)-pantothenate from (R)-pantoate and beta-alanine: step 1/1. Functionally, catalyzes the condensation of pantoate with beta-alanine in an ATP-dependent reaction via a pantoyl-adenylate intermediate. This Azoarcus sp. (strain BH72) protein is Pantothenate synthetase.